Reading from the N-terminus, the 149-residue chain is D-aminoacyl-tRNA deacylase (149 aa).

A Gly-cisPro motif, important for rejection of L-amino acids motif is present at residues 137 to 138 (GP).

The protein belongs to the DTD family. In terms of assembly, homodimer.

The protein localises to the cytoplasm. It catalyses the reaction glycyl-tRNA(Ala) + H2O = tRNA(Ala) + glycine + H(+). The catalysed reaction is a D-aminoacyl-tRNA + H2O = a tRNA + a D-alpha-amino acid + H(+). Functionally, an aminoacyl-tRNA editing enzyme that deacylates mischarged D-aminoacyl-tRNAs. Also deacylates mischarged glycyl-tRNA(Ala), protecting cells against glycine mischarging by AlaRS. Acts via tRNA-based rather than protein-based catalysis; rejects L-amino acids rather than detecting D-amino acids in the active site. By recycling D-aminoacyl-tRNA to D-amino acids and free tRNA molecules, this enzyme counteracts the toxicity associated with the formation of D-aminoacyl-tRNA entities in vivo and helps enforce protein L-homochirality. This chain is D-aminoacyl-tRNA deacylase, found in Clostridium beijerinckii (strain ATCC 51743 / NCIMB 8052) (Clostridium acetobutylicum).